The following is a 35-amino-acid chain: Photosystem II reaction center protein T (35 aa).

A helical transmembrane segment spans residues 3 to 23 (ALVYTFLLVSTLGIIFFAIFF).

Belongs to the PsbT family. In terms of assembly, PSII is composed of 1 copy each of membrane proteins PsbA, PsbB, PsbC, PsbD, PsbE, PsbF, PsbH, PsbI, PsbJ, PsbK, PsbL, PsbM, PsbT, PsbY, PsbZ, Psb30/Ycf12, at least 3 peripheral proteins of the oxygen-evolving complex and a large number of cofactors. It forms dimeric complexes.

The protein resides in the plastid. It localises to the chloroplast thylakoid membrane. Functionally, found at the monomer-monomer interface of the photosystem II (PS II) dimer, plays a role in assembly and dimerization of PSII. PSII is a light-driven water plastoquinone oxidoreductase, using light energy to abstract electrons from H(2)O, generating a proton gradient subsequently used for ATP formation. The protein is Photosystem II reaction center protein T of Nelumbo lutea (American lotus).